We begin with the raw amino-acid sequence, 400 residues long: Multidrug resistance protein MdtH (400 aa).

Residues 1 to 12 (MSRVSQARNLGK) are Cytoplasmic-facing. A helical membrane pass occupies residues 13-33 (YFLLIDNMLVVLGFFVVFPLI). At 34-98 (SIRFVDQMGW…GFATMGIAHE (65 aa)) the chain is on the periplasmic side. Residues 99-116 (PWLLWFSCLLSGLGGTLF) form a helical membrane-spanning segment. At 117–138 (DPPRSALVVKLIRPQQRGRFFS) the chain is on the cytoplasmic side. The chain crosses the membrane as a helical span at residues 139-159 (LLMMQDSAGAVIGALLGSWLL). At 160 to 164 (QYDFR) the chain is on the periplasmic side. The helical transmembrane segment at 165-185 (LVCATGAVLFVLCAAFNAWLL) threads the bilayer. Residues 186 to 213 (PAWKLSTVRTPVREGMTRVMRDKRFVTY) lie on the Cytoplasmic side of the membrane. A helical membrane pass occupies residues 214–232 (VLTLAGYYMLAVQVMLPIM). The Periplasmic portion of the chain corresponds to 233-241 (VNDVAGAPS). A helical transmembrane segment spans residues 242 to 262 (AVKWMYAIEACLSLTLLYPIA). Over 263-274 (RWSEKHFRLEHR) the chain is Cytoplasmic. Residues 275–295 (LMAGLLIMSLSMMPVGMVSGL) traverse the membrane as a helical segment. Topologically, residues 296-297 (QQ) are periplasmic. The helical transmembrane segment at 298–318 (LFTLICLFYIGSIIAEPARET) threads the bilayer. At 319-337 (LSASLADARARGSYMGFSR) the chain is on the cytoplasmic side. Residues 338 to 358 (LGLAIGGAIGYIGGGWLFDLG) form a helical membrane-spanning segment. The Periplasmic segment spans residues 359–365 (KSAHQPE). Residues 366–386 (LPWMMLGIIGIFTFLALGWQF) form a helical membrane-spanning segment. Residues 387–400 (SQKRAARRLLERDA) are Cytoplasmic-facing.

The protein belongs to the major facilitator superfamily. DHA1 family. MdtH (TC 2.A.1.2.21) subfamily.

The protein resides in the cell inner membrane. The polypeptide is Multidrug resistance protein MdtH (Shigella boydii serotype 4 (strain Sb227)).